A 409-amino-acid polypeptide reads, in one-letter code: Toluene 1,2-dioxygenase system ferredoxin--NAD(+) reductase component (409 aa).

4–35 (HVAIIGNGVGGFTTAQALRAEGFEGRISLIGD) contributes to the FAD binding site. 145-173 (RLLIVGGGLIGCEVATTARKLGLSVTILE) is a binding site for NAD(+).

It belongs to the bacterial ring-hydroxylating dioxygenase ferredoxin reductase family. As to quaternary structure, this dioxygenase system consists of four proteins: the two subunits of the hydroxylase component (todC1 and todC2), a ferredoxin (TodB) and a ferredoxin reductase (TodA). FAD is required as a cofactor.

It catalyses the reaction 2 reduced [2Fe-2S]-[ferredoxin] + NAD(+) + H(+) = 2 oxidized [2Fe-2S]-[ferredoxin] + NADH. Its pathway is xenobiotic degradation; toluene degradation. Functionally, part of the electron transfer component of toluene 1,2-dioxygenase, transfers electrons from ferredoxin (TodB) to NADH. This chain is Toluene 1,2-dioxygenase system ferredoxin--NAD(+) reductase component (todA), found in Pseudomonas putida (Arthrobacter siderocapsulatus).